Reading from the N-terminus, the 20-residue chain is Trypsin inhibitor (20 aa).

Residues 1 to 20 are disordered; it reads APSDTTIAETLTITEEFFPD.

Hemolymph.

It is found in the secreted. The protein resides in the extracellular space. Inhibits trypsin stoichiometrically. Also inhibits chymotrypsin very weakly. This Mythimna unipuncta (Armyworm moth) protein is Trypsin inhibitor.